The primary structure comprises 492 residues: Catalase (492 aa).

Catalysis depends on residues His65 and Asn138. Tyr348 contributes to the heme binding site.

The protein belongs to the catalase family. As to quaternary structure, homotetramer. It depends on heme as a cofactor.

It localises to the cytoplasm. It is found in the cytosol. The protein resides in the peroxisome matrix. It catalyses the reaction 2 H2O2 = O2 + 2 H2O. Its function is as follows. Catalyzes the degradation of hydrogen peroxide (H(2)O(2)) generated by peroxisomal oxidases to water and oxygen, thereby protecting cells from the toxic effects of hydrogen peroxide. In Soldanella alpina (Alpine snowbell), this protein is Catalase.